The following is a 145-amino-acid chain: CASP-like protein SELMODRAFT_406854 (145 aa).

The Cytoplasmic portion of the chain corresponds to 1-31; sequence MGVASQSSVANEAGAAPEASIQQTLRGFSSP. Residues 32–52 traverse the membrane as a helical segment; sequence TSLLLRIATAVLCTLTLAFLV. The Extracellular portion of the chain corresponds to 53–75; the sequence is TSKERKEIASIDIVAIWSNSKAL. The chain crosses the membrane as a helical span at residues 76-96; it reads IFLAVVSGICLGYSLLHAAVF. Over 97–112 the chain is Cytoplasmic; sequence LVMLSGNRKPLARKKA. Residues 113–133 traverse the membrane as a helical segment; it reads LDWMVFLADQVFFKIFCWFSI. Residues 134–145 lie on the Extracellular side of the membrane; that stretch reads RVSSRRSKAGFV.

The protein belongs to the Casparian strip membrane proteins (CASP) family. As to quaternary structure, homodimer and heterodimers.

The protein localises to the cell membrane. This chain is CASP-like protein SELMODRAFT_406854, found in Selaginella moellendorffii (Spikemoss).